The sequence spans 117 residues: Large ribosomal subunit protein bL20 (117 aa).

Belongs to the bacterial ribosomal protein bL20 family.

Its function is as follows. Binds directly to 23S ribosomal RNA and is necessary for the in vitro assembly process of the 50S ribosomal subunit. It is not involved in the protein synthesizing functions of that subunit. The protein is Large ribosomal subunit protein bL20 of Roseiflexus castenholzii (strain DSM 13941 / HLO8).